Reading from the N-terminus, the 710-residue chain is F-box only protein 40 (710 aa).

The TRAF-type zinc-finger motif lies at 53-114 (EHTLLCPLEQ…VDSETFLHEN (62 aa)). Disordered regions lie at residues 152-174 (DATE…GAVG) and 234-279 (GSLG…SQEL). Over residues 238–248 (KSEDKNGDVAG) the composition is skewed to basic and acidic residues. The 55-residue stretch at 572 to 626 (LNSLTSLPLEVLQYIAGFLDSISLSQLSQVSVLMRNICATLLQERGMVLSQWKKK) folds into the F-box domain.

As to quaternary structure, directly interacts with SKP1 and CUL1. Expressed only in heart and skeletal muscle.

It is found in the cytoplasm. Functionally, probable substrate-recognition component of the SCF (SKP1-CUL1-F-box protein)-type E3 ubiquitin ligase complex that may function in myogenesis. This chain is F-box only protein 40 (Fbxo40), found in Mus musculus (Mouse).